The chain runs to 183 residues: Copper metallothionein 2 (183 aa).

A cys-rich copper-binding 1 region spans residues 1-35; sequence MAFNPNPEKTTSCCSTSKAQDKCTCPKGKCECETC. The spacer B1 stretch occupies residues 36 to 45; the sequence is PKSTKTPGSG. Residues 46–79 are cys-rich copper-binding 2; the sequence is PCNCGVKEKVSTCGCNGSGAACTCPPGQCACDSC. The interval 80 to 88 is spacer B2; that stretch reads PRKAKSVST. The tract at residues 89-110 is cys-rich copper-binding 3; sequence CGCGGSAAACSCPPGKCACDSC. The segment at 111–120 is spacer B3; it reads PKQAQEKVSS. The tract at residues 121–142 is cys-rich copper-binding 4; that stretch reads CACNGSGGACTCPPGKCSCSGC. The interval 143 to 156 is spacer B4; the sequence is PAQAKENPADQPTT. The tract at residues 157–183 is cys-rich copper-binding 5; the sequence is CGCQGVGVACTCPPGQCACDGCPAKAK.

This sequence belongs to the metallothionein superfamily.

The protein resides in the cytoplasm. Its subcellular location is the cell cortex. Its function is as follows. Copper metallothionein that protects the cell against copper toxicity by tightly chelating copper ions. Required for antioxidant-mediated growth rescue in the presence of fluconazole. Acts as a critical factors for lung colonization and virulence. In Cryptococcus neoformans var. grubii serotype A (strain H99 / ATCC 208821 / CBS 10515 / FGSC 9487) (Filobasidiella neoformans var. grubii), this protein is Copper metallothionein 2.